Reading from the N-terminus, the 419-residue chain is Phospholipase A1-IIgamma (419 aa).

2 coiled-coil regions span residues 1–21 (MKRKKKEEEEEKLIVTREFAK) and 207–227 (NARDQVLREVGRLLEKYKDEE). Serine 236 serves as the catalytic Acyl-ester intermediate. Active-site charge relay system residues include serine 236, aspartate 302, and histidine 339.

Belongs to the AB hydrolase superfamily. Lipase family. In terms of tissue distribution, expressed in seedlings, stems and siliques, and, to a lower extent, in flowers.

The protein resides in the cytoplasm. Functionally, acylhydrolase that catalyzes the hydrolysis of 1,3-diacylglycerol (1,3-DAG) and 1-monoacylglycerol (1-MAG) at the sn-1 position. High activity toward 1,3-DAG and 1-MAG, but low activity toward 1,2-diacylglycerol (1,2-DAG) and 1-lysophosphatidylcholine (1-LPC), and no activity toward phosphatidylcholine (PC), monogalactosyldiacylglycerol (MGDG), digalactosyldiacylglycerol (DGDG), triacylglycerol (TAG) and 2-monoacylglycerol (2-MAG). May be involved in the negative regulation of seedling establishment by inhibiting the breakdown, beta-oxidation and mobilization of seed storage oils. The sequence is that of Phospholipase A1-IIgamma (DSEL) from Arabidopsis thaliana (Mouse-ear cress).